We begin with the raw amino-acid sequence, 476 residues long: Bifunctional protein HldE (476 aa).

Positions 1–319 (MKVSLPAFEK…EALALHHGES (319 aa)) are ribokinase. Residue 195–198 (NMSE) coordinates ATP. Residue aspartate 264 is part of the active site. The tract at residues 345-476 (MTNGCFDILH…AIIQNIMAKQ (132 aa)) is cytidylyltransferase.

This sequence in the N-terminal section; belongs to the carbohydrate kinase PfkB family. It in the C-terminal section; belongs to the cytidylyltransferase family. As to quaternary structure, homodimer.

It catalyses the reaction D-glycero-beta-D-manno-heptose 7-phosphate + ATP = D-glycero-beta-D-manno-heptose 1,7-bisphosphate + ADP + H(+). It carries out the reaction D-glycero-beta-D-manno-heptose 1-phosphate + ATP + H(+) = ADP-D-glycero-beta-D-manno-heptose + diphosphate. It functions in the pathway nucleotide-sugar biosynthesis; ADP-L-glycero-beta-D-manno-heptose biosynthesis; ADP-L-glycero-beta-D-manno-heptose from D-glycero-beta-D-manno-heptose 7-phosphate: step 1/4. Its pathway is nucleotide-sugar biosynthesis; ADP-L-glycero-beta-D-manno-heptose biosynthesis; ADP-L-glycero-beta-D-manno-heptose from D-glycero-beta-D-manno-heptose 7-phosphate: step 3/4. Functionally, catalyzes the phosphorylation of D-glycero-D-manno-heptose 7-phosphate at the C-1 position to selectively form D-glycero-beta-D-manno-heptose-1,7-bisphosphate. Catalyzes the ADP transfer from ATP to D-glycero-beta-D-manno-heptose 1-phosphate, yielding ADP-D-glycero-beta-D-manno-heptose. This Shewanella sp. (strain ANA-3) protein is Bifunctional protein HldE.